The following is a 151-amino-acid chain: UPF0178 protein Ping_0754 (151 aa).

Belongs to the UPF0178 family.

This is UPF0178 protein Ping_0754 from Psychromonas ingrahamii (strain DSM 17664 / CCUG 51855 / 37).